The primary structure comprises 891 residues: Valine--tRNA ligase (891 aa).

Residues 43 to 53 (PFTSGTLHLGH) carry the 'HIGH' region motif. Residues 536-540 (KMSKS) carry the 'KMSKS' region motif. K539 contributes to the ATP binding site.

Belongs to the class-I aminoacyl-tRNA synthetase family. ValS type 2 subfamily.

The protein resides in the cytoplasm. It carries out the reaction tRNA(Val) + L-valine + ATP = L-valyl-tRNA(Val) + AMP + diphosphate. Catalyzes the attachment of valine to tRNA(Val). As ValRS can inadvertently accommodate and process structurally similar amino acids such as threonine, to avoid such errors, it has a 'posttransfer' editing activity that hydrolyzes mischarged Thr-tRNA(Val) in a tRNA-dependent manner. The chain is Valine--tRNA ligase from Pyrococcus horikoshii (strain ATCC 700860 / DSM 12428 / JCM 9974 / NBRC 100139 / OT-3).